We begin with the raw amino-acid sequence, 285 residues long: HTH-type transcriptional regulator MurR (285 aa).

The HTH rpiR-type domain maps to 1 to 77 (MLYLTKISNA…MALIGEYSAS (77 aa)). The segment at residues 37-56 (SRQMAKQLGISQSSIVKFAQ) is a DNA-binding region (H-T-H motif). One can recognise an SIS domain in the interval 128-279 (IIEVISKAPF…SLKMIQRSSE (152 aa)).

As to quaternary structure, homotetramer.

The protein operates within amino-sugar metabolism; N-acetylmuramate degradation [regulation]. Represses the expression of the murPQ operon involved in the uptake and degradation of N-acetylmuramic acid (MurNAc). Binds to two adjacent inverted repeats within the operator region. MurNAc 6-phosphate, the substrate of MurQ, is the specific inducer that weakens binding of MurR to the operator. This chain is HTH-type transcriptional regulator MurR, found in Shigella boydii serotype 4 (strain Sb227).